A 653-amino-acid chain; its full sequence is Exocyst complex component EXO70C1 (653 aa).

Composition is skewed to basic and acidic residues over residues 1-34 (MEKSGNHHHANESSENHDHKSEDHENKQHSDELH), 159-177 (SREEEKKNNNNNNHHDGSN), and 438-451 (NKPEPETKPRQQQR). Disordered regions lie at residues 1-50 (MEKS…HSLV), 159-190 (SREEEKKNNNNNNHHDGSNSDHNNSSTNDSDR), and 432-456 (EANQTDNKPEPETKPRQQQREDDEE).

Belongs to the EXO70 family. As to quaternary structure, interacts with ROH1A. Binds directly to B1L. Phosphorylated. Expressed in anthers, pollen and root trichoblast cells.

The protein localises to the cytoplasm. Functionally, required for global plant growth and for male transmission. Involved in the regulation of tip growth of pollen tube. The protein is Exocyst complex component EXO70C1 of Arabidopsis thaliana (Mouse-ear cress).